The following is a 395-amino-acid chain: Cyclomarin C epoxidase CymV (395 aa).

The protein belongs to the cytochrome P450 family.

Functionally, cytochrome P450; part of the gene cluster that mediates the biosynthesis of cyclic heptapeptides, known as cyclomarins and also of cyclic dipeptides, called cyclomarazines, which have both antimicrobial and cytotoxic effects. First, CymD catalyzes the reverse N-prenylation of monomeric L-tryptophan with dimethylallyl diphosphate (DMAPP) to form N-(1,1-dimethylallyl)-tryptophan (r-N-DMAT). The N-(1,1-dimethylallyl)-tryptophan produced by CymD is then combined with a range of standard and nonproteinogenic amino acid substrates to synthesize the peptides, a process that is probably catalyzed by the non-canonical nonribosomal peptide synthetase (NRPS), CymA. Other proteins in the cluster catalyze further modifications of the peptides including CymV which catalyzes the oxidation of olefinic cyclomarins and cyclomarazines to their respective epoxide derivatives. The polypeptide is Cyclomarin C epoxidase CymV (Salinispora arenicola (strain CNS-205)).